The sequence spans 262 residues: Cytochrome c oxidase subunit 3 (262 aa).

Transmembrane regions (helical) follow at residues 39 to 59 (YDIS…YQWW), 83 to 103 (GMIL…WAFF), 120 to 140 (MGII…ILLA), 163 to 183 (GLFF…YEYI), 198 to 218 (FFMA…FLLV), and 240 to 260 (AWYW…IYWW).

Belongs to the cytochrome c oxidase subunit 3 family. In terms of assembly, component of the cytochrome c oxidase (complex IV, CIV), a multisubunit enzyme composed of a catalytic core of 3 subunits and several supernumerary subunits. The complex exists as a monomer or a dimer and forms supercomplexes (SCs) in the inner mitochondrial membrane with ubiquinol-cytochrome c oxidoreductase (cytochrome b-c1 complex, complex III, CIII).

Its subcellular location is the mitochondrion inner membrane. The catalysed reaction is 4 Fe(II)-[cytochrome c] + O2 + 8 H(+)(in) = 4 Fe(III)-[cytochrome c] + 2 H2O + 4 H(+)(out). Its function is as follows. Component of the cytochrome c oxidase, the last enzyme in the mitochondrial electron transport chain which drives oxidative phosphorylation. The respiratory chain contains 3 multisubunit complexes succinate dehydrogenase (complex II, CII), ubiquinol-cytochrome c oxidoreductase (cytochrome b-c1 complex, complex III, CIII) and cytochrome c oxidase (complex IV, CIV), that cooperate to transfer electrons derived from NADH and succinate to molecular oxygen, creating an electrochemical gradient over the inner membrane that drives transmembrane transport and the ATP synthase. Cytochrome c oxidase is the component of the respiratory chain that catalyzes the reduction of oxygen to water. Electrons originating from reduced cytochrome c in the intermembrane space (IMS) are transferred via the dinuclear copper A center (CU(A)) of subunit 2 and heme A of subunit 1 to the active site in subunit 1, a binuclear center (BNC) formed by heme A3 and copper B (CU(B)). The BNC reduces molecular oxygen to 2 water molecules using 4 electrons from cytochrome c in the IMS and 4 protons from the mitochondrial matrix. The chain is Cytochrome c oxidase subunit 3 (mt:CoIII) from Drosophila melanogaster (Fruit fly).